Here is a 504-residue protein sequence, read N- to C-terminus: Probable ergothioneine transporter EgtUBC (504 aa).

Residues 19–198 (LVQHIQISFV…LLAILFDFLL (180 aa)) form the ABC transmembrane type-1 domain. Transmembrane regions (helical) follow at residues 25 to 44 (ISFVSLFIAVLIALPLGIYL), 57 to 74 (VAAIFQTIPSLALLGLLI), 81 to 97 (IVPAIIALVIYALLPIL), 146 to 170 (MVLIIGTATLAALIGAGGLGDLILL), 179 to 198 (LILLGAIPAALLAILFDFLL), and 210 to 229 (IITISAGILLTAAIIVVPYF). The segment at 231–504 (SDKKEITIAG…DYLKDQGIIK (274 aa)) is ergothioneine binding domain.

The protein in the N-terminal section; belongs to the binding-protein-dependent transport system permease family. In the C-terminal section; belongs to the OsmX family. In terms of assembly, the complex is probably composed of at least an ATP-binding protein (EgtUA) and a transmembrane protein (EgtUBC).

The protein resides in the membrane. Its function is as follows. Part of an ABC transporter complex EgtU required for the uptake of ergothioneine (EGT), a natural low-molecular weight (LMW) thiol antioxidant. Responsible for the translocation of the substrate across the membrane. Also contains a C-terminal periplasmic solute-binding domain (SBD) which binds to EGT with sub-micromolar affinity. Does not bind glycine betaine, carnitine, choline, proline, or cholate. Plays a role in bile acid tolerance. Dispensable for choline uptake. Probably not involved in betaine, carnitine or choline mediated osmo- or chill tolerance. Plays a role in enhancing virulence in mice. This is Probable ergothioneine transporter EgtUBC from Listeria monocytogenes serovar 1/2a (strain ATCC BAA-679 / EGD-e).